The following is a 94-amino-acid chain: Large ribosomal subunit protein bL25 (94 aa).

The protein belongs to the bacterial ribosomal protein bL25 family. Part of the 50S ribosomal subunit; part of the 5S rRNA/L5/L18/L25 subcomplex. Contacts the 5S rRNA. Binds to the 5S rRNA independently of L5 and L18.

This is one of the proteins that binds to the 5S RNA in the ribosome where it forms part of the central protuberance. This Klebsiella pneumoniae subsp. pneumoniae (strain ATCC 700721 / MGH 78578) protein is Large ribosomal subunit protein bL25.